Consider the following 822-residue polypeptide: Cadherin-3 (822 aa).

The N-terminal stretch at 1–25 (MELLSGPHAFLLLLLQVCWLRSVVS) is a signal peptide. A propeptide spanning residues 26–99 (EPYRAGFIGE…PTRILRRRKR (74 aa)) is cleaved from the precursor. Cadherin domains are found at residues 100-207 (EWVM…KPKF), 208-320 (TQDT…APEF), 321-432 (EPQK…APVF), 433-538 (VPPS…DHGP), and 539-645 (IPEP…RPWK). Over 100–647 (EWVMPPIFVP…NDCPRPWKGG (548 aa)) the chain is Extracellular. N192 is a glycosylation site (N-linked (GlcNAc...) asparagine). A glycan (N-linked (GlcNAc...) asparagine) is linked at N558. A helical membrane pass occupies residues 648 to 670 (FILPILGAVLALLTLLLALLLLV). The Cytoplasmic segment spans residues 671–822 (RKKRKVKEPL…ADMYGGGEDD (152 aa)).

As to quaternary structure, interacts with CDCP1 and CTNNB1.

It is found in the cell membrane. Cadherins are calcium-dependent cell adhesion proteins. They preferentially interact with themselves in a homophilic manner in connecting cells; cadherins may thus contribute to the sorting of heterogeneous cell types. This is Cadherin-3 (Cdh3) from Mus musculus (Mouse).